Reading from the N-terminus, the 65-residue chain is MKQDIHPKYNVVTVSCACGNEFESGSVKQALKVEICSNCHPFFTGKQKFVDAGGRVDRFKRKYNL.

Cys16, Cys18, Cys36, and Cys39 together coordinate Zn(2+).

This sequence belongs to the bacterial ribosomal protein bL31 family. Type A subfamily. As to quaternary structure, part of the 50S ribosomal subunit. It depends on Zn(2+) as a cofactor.

Binds the 23S rRNA. The protein is Large ribosomal subunit protein bL31 of Brevibacillus brevis (strain 47 / JCM 6285 / NBRC 100599).